The following is a 138-amino-acid chain: Large ribosomal subunit protein uL16 (138 aa).

The segment covering 1–15 (MLSPKKVKYRKKQRG) has biased composition (basic residues). The tract at residues 1–20 (MLSPKKVKYRKKQRGRLSGE) is disordered.

It belongs to the universal ribosomal protein uL16 family. Part of the 50S ribosomal subunit.

In terms of biological role, binds 23S rRNA and is also seen to make contacts with the A and possibly P site tRNAs. The polypeptide is Large ribosomal subunit protein uL16 (Borrelia hermsii (strain HS1 / DAH)).